We begin with the raw amino-acid sequence, 241 residues long: MALMLVLFFLAAVLPPSLLQDNSQENSLEKLSTSKKSVQEEIVSKHNQLRRKVSPSGSDLLNMEWNYDAQVNAQQRADKCTFSHSPIELRTTNLKCGENLFMSSYLVPWSSVIQGWYNESKGLIFGVGPKQNVSVVGHHTQVVWKSNLQVACGVAECPENPLRYFYVCRYCPVLNYSGHYPSRPYLAYTARAPCASCPDRCEDGLCTKSCQYKDMSFWCKRLEYVCKHPGLKKRCLATCQC.

A signal peptide spans 1 to 19; it reads MALMLVLFFLAAVLPPSLL. Residues 44 to 170 form the SCP domain; the sequence is SKHNQLRRKV…PLRYFYVCRY (127 aa). N-linked (GlcNAc...) asparagine glycans are attached at residues asparagine 118, asparagine 132, and asparagine 175. 5 cysteine pairs are disulfide-bonded: cysteine 194-cysteine 201, cysteine 197-cysteine 206, cysteine 210-cysteine 241, cysteine 219-cysteine 235, and cysteine 226-cysteine 239. The region spanning 210-241 is the ShKT domain; it reads CQYKDMSFWCKRLEYVCKHPGLKKRCLATCQC.

The protein belongs to the CRISP family. As to quaternary structure, interacts with A1BG. Interacts with KNG1 isoform LMW. Expressed in submandibular gland.

Its subcellular location is the cytoplasmic vesicle. It localises to the secretory vesicle. Its function is as follows. This protein is supposed to help spermatozoa undergo functional maturation while they move from the testis to the ductus deferens. This chain is Cysteine-rich secretory protein 3 (Crisp3), found in Mus musculus (Mouse).